The primary structure comprises 155 residues: Deoxyuridine 5'-triphosphate nucleotidohydrolase (155 aa).

Residues 74 to 76 (RSG), asparagine 87, and 91 to 93 (TID) each bind substrate.

The protein belongs to the dUTPase family. It depends on Mg(2+) as a cofactor.

The enzyme catalyses dUTP + H2O = dUMP + diphosphate + H(+). It functions in the pathway pyrimidine metabolism; dUMP biosynthesis; dUMP from dCTP (dUTP route): step 2/2. In terms of biological role, this enzyme is involved in nucleotide metabolism: it produces dUMP, the immediate precursor of thymidine nucleotides and it decreases the intracellular concentration of dUTP so that uracil cannot be incorporated into DNA. The protein is Deoxyuridine 5'-triphosphate nucleotidohydrolase of Cereibacter sphaeroides (strain ATCC 17023 / DSM 158 / JCM 6121 / CCUG 31486 / LMG 2827 / NBRC 12203 / NCIMB 8253 / ATH 2.4.1.) (Rhodobacter sphaeroides).